The chain runs to 213 residues: ATP synthase peripheral stalk subunit OSCP, mitochondrial (213 aa).

Residues 1 to 23 (MASQAVSGLSRQVRCFSTSVVRP) constitute a mitochondrion transit peptide. Residues 5 to 23 (AVSGLSRQVRCFSTSVVRP) carry the SIFI-degron motif. N6-acetyllysine is present on residues lysine 54, lysine 60, lysine 70, and lysine 73. At lysine 90 the chain carries N6-succinyllysine. Lysine 100, lysine 158, and lysine 162 each carry N6-acetyllysine; alternate. Residues lysine 100, lysine 158, and lysine 162 each carry the N6-succinyllysine; alternate modification. N6-acetyllysine occurs at positions 172, 176, and 192. Residue lysine 199 is modified to N6-succinyllysine.

Belongs to the ATPase delta chain family. Component of the ATP synthase complex composed at least of ATP5F1A/subunit alpha, ATP5F1B/subunit beta, ATP5MC1/subunit c (homooctomer), MT-ATP6/subunit a, MT-ATP8/subunit 8, ATP5ME/subunit e, ATP5MF/subunit f, ATP5MG/subunit g, ATP5MK/subunit k, ATP5MJ/subunit j, ATP5F1C/subunit gamma, ATP5F1D/subunit delta, ATP5F1E/subunit epsilon, ATP5PF/subunit F6, ATP5PB/subunit b, ATP5PD/subunit d, ATP5PO/subunit OSCP. ATP synthase complex consists of a soluble F(1) head domain (subunits alpha(3) and beta(3)) - the catalytic core - and a membrane F(0) domain - the membrane proton channel (subunits c, a, 8, e, f, g, k and j). These two domains are linked by a central stalk (subunits gamma, delta, and epsilon) rotating inside the F1 region and a stationary peripheral stalk (subunits F6, b, d, and OSCP). Acetylation at Lys-162 decreases ATP production. Deacetylated by SIRT3. Post-translationally, in response to mitochondrial stress, the precursor protein is ubiquitinated by the SIFI complex in the cytoplasm before mitochondrial import, leading to its degradation. Within the SIFI complex, UBR4 initiates ubiquitin chain that are further elongated or branched by KCMF1.

Its subcellular location is the mitochondrion. The protein resides in the mitochondrion inner membrane. Its function is as follows. Subunit OSCP, of the mitochondrial membrane ATP synthase complex (F(1)F(0) ATP synthase or Complex V) that produces ATP from ADP in the presence of a proton gradient across the membrane which is generated by electron transport complexes of the respiratory chain. ATP synthase complex consist of a soluble F(1) head domain - the catalytic core - and a membrane F(1) domain - the membrane proton channel. These two domains are linked by a central stalk rotating inside the F(1) region and a stationary peripheral stalk. During catalysis, ATP synthesis in the catalytic domain of F(1) is coupled via a rotary mechanism of the central stalk subunits to proton translocation. In vivo, can only synthesize ATP although its ATP hydrolase activity can be activated artificially in vitro. Part of the complex F(0) domain. Part of the complex F(0) domain and the peripheric stalk, which acts as a stator to hold the catalytic alpha(3)beta(3) subcomplex and subunit a/ATP6 static relative to the rotary elements. The protein is ATP synthase peripheral stalk subunit OSCP, mitochondrial of Sus scrofa (Pig).